The sequence spans 600 residues: Calcium/calmodulin-dependent serine/threonine-protein kinase 1 (600 aa).

The tract at residues 1–99 (MGLCHGKSAA…GGFKRPFPPP (99 aa)) is disordered. Over residues 24-56 (TRVAEAAAAPAKPASPAPSAAAAAAAPAKPGTP) the composition is skewed to low complexity. The span at 74 to 85 (YKGSPANSSVAS) shows a compositional bias: polar residues. In terms of domain architecture, Protein kinase spans 147–409 (YELGREVGRG…AAQALCHPWI (263 aa)). Residues 153 to 161 (VGRGHFGYT) and K179 each bind ATP. D275 functions as the Proton acceptor in the catalytic mechanism.

Belongs to the protein kinase superfamily. Ser/Thr protein kinase family. Post-translationally, autophosphorylated. In terms of tissue distribution, highly expressed in roots in the zone of cell division. Expressed in leaf mesophyll cells and at lower levels in mature stems.

It catalyses the reaction L-seryl-[protein] + ATP = O-phospho-L-seryl-[protein] + ADP + H(+). The catalysed reaction is L-threonyl-[protein] + ATP = O-phospho-L-threonyl-[protein] + ADP + H(+). Activated by the binding of calmodulin-like protein 1 (CML1) in the presence of Ca(2+). Possesses kinase activity in vitro. The sequence is that of Calcium/calmodulin-dependent serine/threonine-protein kinase 1 (CAMK1) from Oryza sativa subsp. japonica (Rice).